A 132-amino-acid chain; its full sequence is ATP synthase epsilon chain (132 aa).

The protein belongs to the ATPase epsilon chain family. In terms of assembly, F-type ATPases have 2 components, CF(1) - the catalytic core - and CF(0) - the membrane proton channel. CF(1) has five subunits: alpha(3), beta(3), gamma(1), delta(1), epsilon(1). CF(0) has three main subunits: a, b and c.

Its subcellular location is the cell inner membrane. Its function is as follows. Produces ATP from ADP in the presence of a proton gradient across the membrane. The sequence is that of ATP synthase epsilon chain from Jannaschia sp. (strain CCS1).